Consider the following 384-residue polypeptide: S-adenosylmethionine synthase (384 aa).

His15 contacts ATP. Residue Asp17 participates in Mg(2+) binding. K(+) is bound at residue Glu43. 2 residues coordinate L-methionine: Glu56 and Gln99. The interval 99 to 109 (QSPDINQGVDR) is flexible loop. ATP contacts are provided by residues 164–166 (DAK), 230–231 (RF), Asp239, 245–246 (RK), Ala262, and Lys266. Residue Asp239 coordinates L-methionine. Lys270 contacts L-methionine.

Belongs to the AdoMet synthase family. In terms of assembly, homotetramer; dimer of dimers. Mg(2+) is required as a cofactor. K(+) serves as cofactor.

Its subcellular location is the cytoplasm. The enzyme catalyses L-methionine + ATP + H2O = S-adenosyl-L-methionine + phosphate + diphosphate. Its pathway is amino-acid biosynthesis; S-adenosyl-L-methionine biosynthesis; S-adenosyl-L-methionine from L-methionine: step 1/1. In terms of biological role, catalyzes the formation of S-adenosylmethionine (AdoMet) from methionine and ATP. The overall synthetic reaction is composed of two sequential steps, AdoMet formation and the subsequent tripolyphosphate hydrolysis which occurs prior to release of AdoMet from the enzyme. The protein is S-adenosylmethionine synthase of Salmonella gallinarum (strain 287/91 / NCTC 13346).